The primary structure comprises 84 residues: ATP synthase subunit c (84 aa).

A run of 2 helical transmembrane segments spans residues 21–38 (ALGA…IGKI) and 60–80 (MIII…VCLL).

This sequence belongs to the ATPase C chain family. As to quaternary structure, F-type ATPases have 2 components, F(1) - the catalytic core - and F(0) - the membrane proton channel. F(1) has five subunits: alpha(3), beta(3), gamma(1), delta(1), epsilon(1). F(0) has three main subunits: a(1), b(2) and c(10-14). The alpha and beta chains form an alternating ring which encloses part of the gamma chain. F(1) is attached to F(0) by a central stalk formed by the gamma and epsilon chains, while a peripheral stalk is formed by the delta and b chains.

The protein resides in the cell inner membrane. Its function is as follows. F(1)F(0) ATP synthase produces ATP from ADP in the presence of a proton or sodium gradient. F-type ATPases consist of two structural domains, F(1) containing the extramembraneous catalytic core and F(0) containing the membrane proton channel, linked together by a central stalk and a peripheral stalk. During catalysis, ATP synthesis in the catalytic domain of F(1) is coupled via a rotary mechanism of the central stalk subunits to proton translocation. Key component of the F(0) channel; it plays a direct role in translocation across the membrane. A homomeric c-ring of between 10-14 subunits forms the central stalk rotor element with the F(1) delta and epsilon subunits. The chain is ATP synthase subunit c from Phocaeicola vulgatus (strain ATCC 8482 / DSM 1447 / JCM 5826 / CCUG 4940 / NBRC 14291 / NCTC 11154) (Bacteroides vulgatus).